An 84-amino-acid polypeptide reads, in one-letter code: UPF0291 protein SMU_447 (84 aa).

The segment at 57–84 (EGNDITPAKLKEIQRQKGIHGRKPEDNS) is disordered.

The protein belongs to the UPF0291 family.

The protein localises to the cytoplasm. The sequence is that of UPF0291 protein SMU_447 from Streptococcus mutans serotype c (strain ATCC 700610 / UA159).